Here is a 200-residue protein sequence, read N- to C-terminus: Inner membrane-spanning protein YciB (200 aa).

The next 6 helical transmembrane spans lie at 7–27 (HPLFKLATELGPLIVFFVVNA), 32–52 (FAATGAFMVAIVAAMIASYVV), 56–76 (VPLMAIVTGIVVLVFGTLTLV), 93–113 (LFAAVLGGGLLFNRSFIAIMF), 126–146 (ILTFRWALFFAAMAVLNEIIW), and 153–173 (FWVGFKAFGVVPLTMIFAIAQ).

It belongs to the YciB family.

Its subcellular location is the cell inner membrane. Its function is as follows. Plays a role in cell envelope biogenesis, maintenance of cell envelope integrity and membrane homeostasis. The chain is Inner membrane-spanning protein YciB from Bradyrhizobium sp. (strain BTAi1 / ATCC BAA-1182).